The primary structure comprises 582 residues: Proline--tRNA ligase (582 aa).

This sequence belongs to the class-II aminoacyl-tRNA synthetase family. ProS type 1 subfamily. In terms of assembly, homodimer.

The protein localises to the cytoplasm. The catalysed reaction is tRNA(Pro) + L-proline + ATP = L-prolyl-tRNA(Pro) + AMP + diphosphate. Catalyzes the attachment of proline to tRNA(Pro) in a two-step reaction: proline is first activated by ATP to form Pro-AMP and then transferred to the acceptor end of tRNA(Pro). As ProRS can inadvertently accommodate and process non-cognate amino acids such as alanine and cysteine, to avoid such errors it has two additional distinct editing activities against alanine. One activity is designated as 'pretransfer' editing and involves the tRNA(Pro)-independent hydrolysis of activated Ala-AMP. The other activity is designated 'posttransfer' editing and involves deacylation of mischarged Ala-tRNA(Pro). The misacylated Cys-tRNA(Pro) is not edited by ProRS. In Mycobacterium tuberculosis (strain CDC 1551 / Oshkosh), this protein is Proline--tRNA ligase.